A 122-amino-acid chain; its full sequence is Ribosome-binding factor A (122 aa).

This sequence belongs to the RbfA family. As to quaternary structure, monomer. Binds 30S ribosomal subunits, but not 50S ribosomal subunits or 70S ribosomes.

It is found in the cytoplasm. One of several proteins that assist in the late maturation steps of the functional core of the 30S ribosomal subunit. Associates with free 30S ribosomal subunits (but not with 30S subunits that are part of 70S ribosomes or polysomes). Required for efficient processing of 16S rRNA. May interact with the 5'-terminal helix region of 16S rRNA. In Pelagibacter ubique (strain HTCC1062), this protein is Ribosome-binding factor A.